The primary structure comprises 645 residues: 1,4-alpha-glucan branching enzyme GlgB (645 aa).

The active-site Nucleophile is the Asp-309. Glu-352 (proton donor) is an active-site residue. The interval 619–645 (VKTRKGSKKQDGSKTKVRSNVTSRGKR) is disordered. Residues 636–645 (RSNVTSRGKR) show a composition bias toward polar residues.

This sequence belongs to the glycosyl hydrolase 13 family. GlgB subfamily. Monomer.

It carries out the reaction Transfers a segment of a (1-&gt;4)-alpha-D-glucan chain to a primary hydroxy group in a similar glucan chain.. Its pathway is glycan biosynthesis; glycogen biosynthesis. Its function is as follows. Catalyzes the formation of the alpha-1,6-glucosidic linkages in glycogen by scission of a 1,4-alpha-linked oligosaccharide from growing alpha-1,4-glucan chains and the subsequent attachment of the oligosaccharide to the alpha-1,6 position. The chain is 1,4-alpha-glucan branching enzyme GlgB from Bacillus cereus (strain AH820).